The sequence spans 225 residues: Thymidylate kinase (225 aa).

12-19 (GGEGAGKS) is an ATP binding site.

This sequence belongs to the thymidylate kinase family.

The catalysed reaction is dTMP + ATP = dTDP + ADP. Phosphorylation of dTMP to form dTDP in both de novo and salvage pathways of dTTP synthesis. The chain is Thymidylate kinase from Chelativorans sp. (strain BNC1).